The following is a 64-amino-acid chain: DNA gyrase inhibitor YacG (64 aa).

The Zn(2+) site is built by Cys9, Cys12, Cys28, and Cys32. The segment at Lys45–Lys64 is disordered. A compositionally biased stretch (acidic residues) spans Ser54–Lys64.

This sequence belongs to the DNA gyrase inhibitor YacG family. Interacts with GyrB. Zn(2+) is required as a cofactor.

Functionally, inhibits all the catalytic activities of DNA gyrase by preventing its interaction with DNA. Acts by binding directly to the C-terminal domain of GyrB, which probably disrupts DNA binding by the gyrase. The chain is DNA gyrase inhibitor YacG from Citrobacter koseri (strain ATCC BAA-895 / CDC 4225-83 / SGSC4696).